The sequence spans 203 residues: Glycerol-3-phosphate acyltransferase (203 aa).

Helical transmembrane passes span 5 to 25 (IIYLLAYLIGAIPFGLLLAQI), 58 to 78 (TLAVATVILDALKGVLPILMA), 87 to 107 (ILWTMAVLAVFGHCFSPYLKF), 118 to 138 (GVLAVFLPFEIICALLAWFII), 150 to 170 (LGAMIVLIATSFIFHYDIPVI), and 176 to 196 (IFIIAFIVVYKHIPNILRLIG).

This sequence belongs to the PlsY family. As to quaternary structure, probably interacts with PlsX.

It is found in the cell inner membrane. The enzyme catalyses an acyl phosphate + sn-glycerol 3-phosphate = a 1-acyl-sn-glycero-3-phosphate + phosphate. It functions in the pathway lipid metabolism; phospholipid metabolism. In terms of biological role, catalyzes the transfer of an acyl group from acyl-phosphate (acyl-PO(4)) to glycerol-3-phosphate (G3P) to form lysophosphatidic acid (LPA). This enzyme utilizes acyl-phosphate as fatty acyl donor, but not acyl-CoA or acyl-ACP. This Campylobacter lari (strain RM2100 / D67 / ATCC BAA-1060) protein is Glycerol-3-phosphate acyltransferase.